The chain runs to 45 residues: Photosystem II reaction center protein K (45 aa).

Positions 1–8 (MITAIIIA) are excised as a propeptide. The helical transmembrane segment at 23 to 43 (ILPVIPIFFLLLAFVWQAAIG) threads the bilayer.

It belongs to the PsbK family. As to quaternary structure, PSII is composed of 1 copy each of membrane proteins PsbA, PsbB, PsbC, PsbD, PsbE, PsbF, PsbH, PsbI, PsbJ, PsbK, PsbL, PsbM, PsbT, PsbX, PsbY, PsbZ, Psb30/Ycf12, at least 3 peripheral proteins of the oxygen-evolving complex and a large number of cofactors. It forms dimeric complexes.

Its subcellular location is the plastid. The protein resides in the chloroplast thylakoid membrane. One of the components of the core complex of photosystem II (PSII). PSII is a light-driven water:plastoquinone oxidoreductase that uses light energy to abstract electrons from H(2)O, generating O(2) and a proton gradient subsequently used for ATP formation. It consists of a core antenna complex that captures photons, and an electron transfer chain that converts photonic excitation into a charge separation. This Gracilaria tenuistipitata var. liui (Red alga) protein is Photosystem II reaction center protein K.